The sequence spans 166 residues: PTS system glucose-specific EIIA component (166 aa).

The PTS EIIA type-1 domain occupies 34-138 (DPVFAQKMMG…SVISPIIITN (105 aa)). 2 residues coordinate Zn(2+): His71 and His86. Catalysis depends on His86, which acts as the Tele-phosphohistidine intermediate; for EIIA activity. A Phosphohistidine; by HPr modification is found at His86.

As to quaternary structure, heterodimer with glycerol kinase (glpk). It depends on Zn(2+) as a cofactor.

The protein resides in the cytoplasm. Functionally, the phosphoenolpyruvate-dependent sugar phosphotransferase system (sugar PTS), a major carbohydrate active transport system, catalyzes the phosphorylation of incoming sugar substrates concomitantly with their translocation across the cell membrane. The enzyme II complex composed of PtsG and Crr is involved in glucose transport. The chain is PTS system glucose-specific EIIA component (crr) from Staphylococcus aureus (strain COL).